A 1590-amino-acid chain; its full sequence is Pentafunctional AROM polypeptide (1590 aa).

The interval 1–387 (MGSTTFENPT…YEPKASVVED (387 aa)) is 3-dehydroquinate synthase. Residues 49–51 (DTN), 86–89 (ENSK), 117–119 (GGV), and Asp122 each bind NAD(+). Arg133 is a binding site for 7-phospho-2-dehydro-3-deoxy-D-arabino-heptonate. 142-143 (TT) is an NAD(+) binding site. Residues Asp149 and Lys155 each contribute to the 7-phospho-2-dehydro-3-deoxy-D-arabino-heptonate site. Lys164 serves as a coordination point for NAD(+). Asn165 provides a ligand contact to 7-phospho-2-dehydro-3-deoxy-D-arabino-heptonate. NAD(+)-binding positions include 182-185 (FLET) and Asn193. Glu197 is a binding site for Zn(2+). Residues 197–200 (EVVK) and Lys253 contribute to the 7-phospho-2-dehydro-3-deoxy-D-arabino-heptonate site. Residue Glu263 is the Proton acceptor; for 3-dehydroquinate synthase activity of the active site. 7-phospho-2-dehydro-3-deoxy-D-arabino-heptonate is bound by residues 267–271 (RNILN) and His274. His274 provides a ligand contact to Zn(2+). The active-site Proton acceptor; for 3-dehydroquinate synthase activity is the His278. 7-phospho-2-dehydro-3-deoxy-D-arabino-heptonate-binding residues include His290 and Lys359. His290 serves as a coordination point for Zn(2+). The interval 400-841 (VRPSVPETLN…WDILSKSFQV (442 aa)) is EPSP synthase. The active-site For EPSP synthase activity is the Cys823. The segment at 863–1055 (DKSIFIIGMR…RNKPQSFFVS (193 aa)) is shikimate kinase. 870–877 (GMRGAGKT) contributes to the ATP binding site. The tract at residues 1056 to 1276 (LTMPDISGAA…AAPGQLSAAE (221 aa)) is 3-dehydroquinase. His1179 functions as the Proton acceptor; for 3-dehydroquinate dehydratase activity in the catalytic mechanism. Lys1207 acts as the Schiff-base intermediate with substrate; for 3-dehydroquinate dehydratase activity in catalysis. Positions 1289–1590 (PKSFYLFGTP…KMDKHPTFVC (302 aa)) are shikimate dehydrogenase.

In the N-terminal section; belongs to the sugar phosphate cyclases superfamily. Dehydroquinate synthase family. The protein in the 2nd section; belongs to the EPSP synthase family. It in the 3rd section; belongs to the shikimate kinase family. This sequence in the 4th section; belongs to the type-I 3-dehydroquinase family. In the C-terminal section; belongs to the shikimate dehydrogenase family. Homodimer. It depends on Zn(2+) as a cofactor.

The protein resides in the cytoplasm. It catalyses the reaction 7-phospho-2-dehydro-3-deoxy-D-arabino-heptonate = 3-dehydroquinate + phosphate. The enzyme catalyses 3-dehydroquinate = 3-dehydroshikimate + H2O. It carries out the reaction shikimate + NADP(+) = 3-dehydroshikimate + NADPH + H(+). The catalysed reaction is shikimate + ATP = 3-phosphoshikimate + ADP + H(+). It catalyses the reaction 3-phosphoshikimate + phosphoenolpyruvate = 5-O-(1-carboxyvinyl)-3-phosphoshikimate + phosphate. It participates in metabolic intermediate biosynthesis; chorismate biosynthesis; chorismate from D-erythrose 4-phosphate and phosphoenolpyruvate: step 2/7. Its pathway is metabolic intermediate biosynthesis; chorismate biosynthesis; chorismate from D-erythrose 4-phosphate and phosphoenolpyruvate: step 3/7. It functions in the pathway metabolic intermediate biosynthesis; chorismate biosynthesis; chorismate from D-erythrose 4-phosphate and phosphoenolpyruvate: step 4/7. The protein operates within metabolic intermediate biosynthesis; chorismate biosynthesis; chorismate from D-erythrose 4-phosphate and phosphoenolpyruvate: step 5/7. It participates in metabolic intermediate biosynthesis; chorismate biosynthesis; chorismate from D-erythrose 4-phosphate and phosphoenolpyruvate: step 6/7. Its function is as follows. The AROM polypeptide catalyzes 5 consecutive enzymatic reactions in prechorismate polyaromatic amino acid biosynthesis. This is Pentafunctional AROM polypeptide from Sclerotinia sclerotiorum (White mold).